The primary structure comprises 173 residues: MEIISTQKFILLTLATVAFLTPHGACLDELMKSSLESREDDDDKYYETKDSILEEKQRSLNFEEMKDWGSKNFMKVNTPTVNKVPNSVANLPLRFGRSNPEERSIKPSAYLPLRFGRAFGESLSRRAPNLSNRSGRSPLARSSIQSLLNLSQRFGKSVPISLSQGVQESEPGM.

Residues 1–26 form the signal peptide; sequence MEIISTQKFILLTLATVAFLTPHGAC. A propeptide spanning residues 27–82 is cleaved from the precursor; it reads LDELMKSSLESREDDDDKYYETKDSILEEKQRSLNFEEMKDWGSKNFMKVNTPTVN. The residue at position 95 (Phe-95) is a Phenylalanine amide. Residues 98–103 constitute a propeptide that is removed on maturation; it reads SNPEER. At Phe-115 the chain carries Phenylalanine amide. The propeptide occupies 118 to 140; that stretch reads AFGESLSRRAPNLSNRSGRSPLA. Phe-154 is subject to Phenylalanine amide. A propeptide spanning residues 157–173 is cleaved from the precursor; sequence SVPISLSQGVQESEPGM.

Belongs to the FARP (FMRFamide related peptide) family. As to expression, specifically expressed in the diencephalon.

Its subcellular location is the secreted. In terms of biological role, hypothalamic factor, responsible for the negative regulation of gonadotropin secretion. The protein is Gonadotropin inhibitory hormone peptides (GNIH) of Coturnix japonica (Japanese quail).